A 151-amino-acid chain; its full sequence is Brain ribonuclease (151 aa).

Positions 1–25 (KESAAAKFRRQHMDAGSSSSGNSNY) are disordered. K7 and R10 together coordinate substrate. The active-site Proton acceptor is H12. 4 disulfides stabilise this stretch: C26-C84, C40-C95, C58-C110, and C65-C72. Residue 41–45 (KPVNT) coordinates substrate. N62 carries N-linked (GlcNAc...) asparagine glycosylation. Residues K66 and R85 each contribute to the substrate site. The active-site Proton donor is the H119. Residue T129 is glycosylated (O-linked (GalNAc...) threonine). An O-linked (GalNAc...) serine glycan is attached at S133.

The protein belongs to the pancreatic ribonuclease family.

It is found in the secreted. In Axis porcinus (Hog deer), this protein is Brain ribonuclease (BRN).